The primary structure comprises 199 residues: Oleosin 21.2 kDa (199 aa).

Residues Met1–Phe14 are compositionally biased toward basic and acidic residues. Positions Met1–Gly31 are disordered. Position 2 is an N-acetylalanine (Ala2). Residues Ala2–Ser56 form a polar region. Over residues Gly22–Gly31 the composition is skewed to gly residues. 3 consecutive transmembrane segments (helical) span residues Ser51–Ala71, Gly72–Phe92, and Ile96–Phe116. The hydrophobic stretch occupies residues Leu57 to Met128. A disordered region spans residues Lys159–Ala199. Positions Gln172–Gln193 are enriched in basic and acidic residues.

The protein belongs to the oleosin family.

The protein resides in the lipid droplet. The protein localises to the membrane. Its function is as follows. May have a structural role to stabilize the lipid body during desiccation of the seed by preventing coalescence of the oil. Probably interacts with both lipid and phospholipid moieties of lipid bodies. May also provide recognition signals for specific lipase anchorage in lipolysis during seedling growth. The polypeptide is Oleosin 21.2 kDa (Arabidopsis thaliana (Mouse-ear cress)).